The following is a 303-amino-acid chain: Ornithine carbamoyltransferase (303 aa).

Carbamoyl phosphate-binding positions include 52–55 (STRT), Gln-79, Arg-103, and 130–133 (HPCQ). Residues Asn-161, Asp-221, and 225 to 226 (SM) each bind L-ornithine. Residues 260-261 (CL) and Arg-288 contribute to the carbamoyl phosphate site.

Belongs to the aspartate/ornithine carbamoyltransferase superfamily. OTCase family.

It localises to the cytoplasm. The catalysed reaction is carbamoyl phosphate + L-ornithine = L-citrulline + phosphate + H(+). Its pathway is amino-acid biosynthesis; L-arginine biosynthesis; L-arginine from L-ornithine and carbamoyl phosphate: step 1/3. Reversibly catalyzes the transfer of the carbamoyl group from carbamoyl phosphate (CP) to the N(epsilon) atom of ornithine (ORN) to produce L-citrulline. This chain is Ornithine carbamoyltransferase (argF), found in Rhizobium meliloti (strain 1021) (Ensifer meliloti).